The following is a 588-amino-acid chain: Urease subunit alpha (588 aa).

Positions Gly-149–Phe-588 constitute a Urease domain. His-154, His-156, and Lys-237 together coordinate Ni(2+). Position 237 is an N6-carboxylysine (Lys-237). His-239 serves as a coordination point for substrate. Ni(2+) is bound by residues His-266 and His-292. The active-site Proton donor is the His-340. Asp-380 is a Ni(2+) binding site.

The protein belongs to the metallo-dependent hydrolases superfamily. Urease alpha subunit family. In terms of assembly, heterotrimer of UreA (gamma), UreB (beta) and UreC (alpha) subunits. Three heterotrimers associate to form the active enzyme. It depends on Ni cation as a cofactor. Carboxylation allows a single lysine to coordinate two nickel ions.

The protein resides in the cytoplasm. It catalyses the reaction urea + 2 H2O + H(+) = hydrogencarbonate + 2 NH4(+). Its pathway is nitrogen metabolism; urea degradation; CO(2) and NH(3) from urea (urease route): step 1/1. The chain is Urease subunit alpha from Opitutus terrae (strain DSM 11246 / JCM 15787 / PB90-1).